Here is a 440-residue protein sequence, read N- to C-terminus: L-seryl-tRNA(Sec) selenium transferase (440 aa).

At lysine 282 the chain carries N6-(pyridoxal phosphate)lysine.

The protein belongs to the SelA family. Pyridoxal 5'-phosphate serves as cofactor.

The protein resides in the cytoplasm. It carries out the reaction L-seryl-tRNA(Sec) + selenophosphate + H(+) = L-selenocysteinyl-tRNA(Sec) + phosphate. It participates in aminoacyl-tRNA biosynthesis; selenocysteinyl-tRNA(Sec) biosynthesis; selenocysteinyl-tRNA(Sec) from L-seryl-tRNA(Sec) (bacterial route): step 1/1. Its function is as follows. Converts seryl-tRNA(Sec) to selenocysteinyl-tRNA(Sec) required for selenoprotein biosynthesis. The protein is L-seryl-tRNA(Sec) selenium transferase of Campylobacter jejuni subsp. jejuni serotype O:2 (strain ATCC 700819 / NCTC 11168).